The primary structure comprises 499 residues: Thioredoxin reductase 1, cytoplasmic (499 aa).

FAD is bound by residues 18-23, 42-43, 58-59, and 63-67; these read IGGGSG, DF, TC, and GCIPK. Cysteine 59 and cysteine 64 are oxidised to a cystine. Lysine 68 bears the N6-succinyllysine mark. The residue at position 131 (tyrosine 131) is a Phosphotyrosine. FAD contacts are provided by residues 131–132 and threonine 161; that span reads YG. Residues arginine 166, 198–204, 221–222, arginine 226, 226–228, 291–293, and lysine 315 each bind NADP(+); these read ASYVALE, RS, RGF, and VGR. Tyrosine 200 lines the FAD pocket. Residues aspartate 334, 341–343, and histidine 472 contribute to the FAD site; that span reads ELT. Glutamate 341 contacts NADP(+). The Proton acceptor role is filled by histidine 472. Positions 497–498 form a cross-link, cysteinyl-selenocysteine (Cys-Sec); it reads CU. Selenocysteine 498 is a non-standard amino acid (selenocysteine).

Belongs to the class-I pyridine nucleotide-disulfide oxidoreductase family. Homodimer. It depends on FAD as a cofactor. Post-translationally, ISGylated.

The protein localises to the cytoplasm. The enzyme catalyses [thioredoxin]-dithiol + NADP(+) = [thioredoxin]-disulfide + NADPH + H(+). The catalysed reaction is H2O2 + NADPH + H(+) = NADP(+) + 2 H2O. In terms of biological role, reduces disulfideprotein thioredoxin (Trx) to its dithiol-containing form. Homodimeric flavoprotein involved in the regulation of cellular redox reactions, growth and differentiation. Contains a selenocysteine residue at the C-terminal active site that is essential for catalysis. Also has reductase activity on hydrogen peroxide (H2O2). The polypeptide is Thioredoxin reductase 1, cytoplasmic (Rattus norvegicus (Rat)).